The primary structure comprises 230 residues: Somatolactin (230 aa).

An N-terminal signal peptide occupies residues 1 to 23; it reads MIKTKVLQAWMGIWLCAVNGLLG. Intrachain disulfides connect Cys-28-Cys-38, Cys-87-Cys-202, and Cys-219-Cys-227. Asn-177 carries an N-linked (GlcNAc...) asparagine glycan.

This sequence belongs to the somatotropin/prolactin family.

The protein resides in the secreted. This Ictalurus punctatus (Channel catfish) protein is Somatolactin.